An 85-amino-acid polypeptide reads, in one-letter code: Large ribosomal subunit protein bL27 (85 aa).

The segment at 1 to 21 (MAHKKAGGSTRNGRDSESKRL) is disordered.

This sequence belongs to the bacterial ribosomal protein bL27 family.

The chain is Large ribosomal subunit protein bL27 from Pseudomonas putida (strain W619).